The chain runs to 236 residues: MAGADVDVGTELRLGLPGGGGGAAEAAAKAAKRGFEETIDLKLKLPTAGMEEAAAGKAEAPAAEKAKRPAEAAAADAEKPPAPKAQAVGWPPVRSFRRNIMTVQSVKSKKEEEADKQQQQPAANASGSNSSAFVKVSMDGAPYLRKVDLKMYNSYKDLSLALQKMFGTFTATGNNMNEVNGSDAVTTYEDKDGDWMLVGDVPWQMFVESCKRLRIMKGSEAIGLAPRAKDKYKNKS.

Disordered stretches follow at residues 1-24 (MAGA…GGAA), 52-93 (EAAA…WPPV), and 105-130 (SVKS…GSNS). The EAR-like (transcriptional repression) motif lies at 12–16 (LRLGL). Positions 52-61 (EAAAGKAEAP) are enriched in low complexity. Positions 62–81 (AAEKAKRPAEAAAADAEKPP) are enriched in basic and acidic residues. A compositionally biased stretch (low complexity) spans 117–130 (QQQQPAANASGSNS). Residues 131-218 (SAFVKVSMDG…SCKRLRIMKG (88 aa)) enclose the PB1 domain.

Belongs to the Aux/IAA family. In terms of assembly, homodimers and heterodimers.

The protein localises to the nucleus. In terms of biological role, aux/IAA proteins are short-lived transcriptional factors that function as repressors of early auxin response genes at low auxin concentrations. In Oryza sativa subsp. japonica (Rice), this protein is Auxin-responsive protein IAA13 (IAA13).